The chain runs to 504 residues: Kinesin light chain 3 (504 aa).

The stretch at 90–150 (ALSAHVGALE…EEEKRHLEFL (61 aa)) forms a coiled coil. The interval 153–197 (LRQYDPPAESQQSESPPRRDSLASLFPSEEEERKGPEAAGAAAAQ) is disordered. The segment covering 158 to 167 (PPAESQQSES) has biased composition (low complexity). Residue serine 173 is modified to Phosphoserine. TPR repeat units follow at residues 207–240 (LRTLHNLVIQYAGQGRYEVAVPLCRQALEDLERS), 249–282 (ATMLNILALVYRDQNKYKEATDLLHDALQIREQT), 291–324 (AATLNNLAVLYGKRGRYREAEPLCQRALEIREKV), 333–366 (AKQLNNLALLCQNQGKFEDVERHYARALSIYEAL), and 375–408 (AKTKNNLASAYLKQNKYQQAEELYKEILHKEDLP). The disordered stretch occupies residues 411-438 (LGAPNTGTAGDAEQALRRSSSLSKIRES). At serine 466 the chain carries Phosphoserine. Threonine 498 carries the phosphothreonine modification. Serine 502 is modified (phosphoserine).

This sequence belongs to the kinesin light chain family. In terms of assembly, oligomer composed of two heavy chains and two light chains. Associates with microtubulin in an ATP-dependent manner. Interacts with KIF5C. Interacts with ODF1. Interacts with LRGUK. Interacts with VDAC2.

The protein resides in the cytoplasm. The protein localises to the cytoskeleton. It is found in the mitochondrion. Functionally, kinesin is a microtubule-associated force-producing protein that may play a role in organelle transport. Plays a role during spermiogenesis in the development of the sperm tail midpiece and in the normal function of spermatozoa. May play a role in the formation of the mitochondrial sheath formation in the developing spermatid midpiece. The polypeptide is Kinesin light chain 3 (KLC3) (Pongo abelii (Sumatran orangutan)).